The primary structure comprises 131 residues: Small ribosomal subunit protein uS11 (131 aa).

It belongs to the universal ribosomal protein uS11 family. As to quaternary structure, part of the 30S ribosomal subunit. Interacts with proteins S7 and S18. Binds to IF-3.

In terms of biological role, located on the platform of the 30S subunit, it bridges several disparate RNA helices of the 16S rRNA. Forms part of the Shine-Dalgarno cleft in the 70S ribosome. The protein is Small ribosomal subunit protein uS11 of Helicobacter pylori (strain Shi470).